A 477-amino-acid chain; its full sequence is Inositol phosphosphingolipids phospholipase C (477 aa).

Residues 1–398 (MYNRKDRDVH…QRQKFFRGLH (398 aa)) are Cytoplasmic-facing. Position 100 (Glu-100) interacts with Mg(2+). Residue His-334 is the Proton acceptor of the active site. A helical transmembrane segment spans residues 399-417 (FWASILLLIASLVVTTFTA). Over 418–424 (NKAGWSS) the chain is Mitochondrial intermembrane. Residues 425–449 (IFWVLFAIAVSISGTIDGAISFLFG) traverse the membrane as a helical segment. The Cytoplasmic portion of the chain corresponds to 450–477 (RSEIRALIEVEQEVLDAEHHLQTFLSEK).

The protein belongs to the neutral sphingomyelinase family. Mg(2+) is required as a cofactor.

The protein resides in the endoplasmic reticulum membrane. Its subcellular location is the mitochondrion outer membrane. The enzyme catalyses an N-acyl-(4R)-4-hydroxysphinganine-1-phosphoinositol + H2O = 1D-myo-inositol 1-phosphate + an N-acyl-(4R)-4-hydroxysphinganine + H(+). It catalyses the reaction a mannosylinositol-1-phospho-N-acyl-sphingoid base + H2O = mannosylinositol-1-phosphate + an N-acyl-sphingoid base + H(+). It carries out the reaction an inositol phosphomannosylinositol-1-phospho-N-acyl-(4R)-4-hydroxysphinganine + H2O = mannosyldiinositol-1-phosphate + an N-acyl-(4R)-4-hydroxysphinganine + H(+). It participates in lipid metabolism; sphingolipid metabolism. Its activity is regulated as follows. Activated through localization to mitochondria in specific growth phases. Its function is as follows. Responsible for the hydrolysis of the phosphosphingolipids (IPS), inositol phosphorylceramide (IPC), mannosylinositol phosphorylceramide (MIPC), and mannosyldiinositol phosphorylceramide (M(IP)2C). Regulates sphingolipid metabolism in mitochondria, especially the formation of alpha-hydroxylated very long chain phytoceramides. The generated ceramides contribute to the normal function of mitochondria. Also active on sphingomyelin (SM), but this activity is probably not physiologically relevant. The protein is Inositol phosphosphingolipids phospholipase C of Saccharomyces cerevisiae (strain ATCC 204508 / S288c) (Baker's yeast).